Here is a 368-residue protein sequence, read N- to C-terminus: Isopentenyl-diphosphate delta-isomerase (368 aa).

Substrate is bound at residue 7 to 8 (RK). FMN contacts are provided by residues T65, 66-68 (GMT), S96, and N125. Residue 96 to 98 (SQR) coordinates substrate. Q160 is a binding site for substrate. E161 contacts Mg(2+). FMN-binding positions include K193, S218, T223, 275-277 (GIR), and 296-297 (AL).

It belongs to the IPP isomerase type 2 family. Homooctamer. Dimer of tetramers. FMN serves as cofactor. The cofactor is NADPH. Requires Mg(2+) as cofactor.

It is found in the cytoplasm. The enzyme catalyses isopentenyl diphosphate = dimethylallyl diphosphate. In terms of biological role, involved in the biosynthesis of isoprenoids. Catalyzes the 1,3-allylic rearrangement of the homoallylic substrate isopentenyl (IPP) to its allylic isomer, dimethylallyl diphosphate (DMAPP). The polypeptide is Isopentenyl-diphosphate delta-isomerase (Saccharolobus islandicus (strain M.16.27) (Sulfolobus islandicus)).